The following is a 351-amino-acid chain: Nicotinate-nucleotide--dimethylbenzimidazole phosphoribosyltransferase (351 aa).

Glutamate 317 acts as the Proton acceptor in catalysis.

Belongs to the CobT family.

It catalyses the reaction 5,6-dimethylbenzimidazole + nicotinate beta-D-ribonucleotide = alpha-ribazole 5'-phosphate + nicotinate + H(+). It functions in the pathway nucleoside biosynthesis; alpha-ribazole biosynthesis; alpha-ribazole from 5,6-dimethylbenzimidazole: step 1/2. Functionally, catalyzes the synthesis of alpha-ribazole-5'-phosphate from nicotinate mononucleotide (NAMN) and 5,6-dimethylbenzimidazole (DMB). This chain is Nicotinate-nucleotide--dimethylbenzimidazole phosphoribosyltransferase, found in Pseudomonas fluorescens (strain ATCC BAA-477 / NRRL B-23932 / Pf-5).